We begin with the raw amino-acid sequence, 471 residues long: COP9 signalosome complex subunit 1 (471 aa).

The PCI domain occupies 249–411 (CFLLASFDHC…KILYARDVDQ (163 aa)). A disordered region spans residues 445–471 (HVKSPPREGSQGELTPANSQSRMSTNM). Ser448 and Ser454 each carry phosphoserine. Polar residues predominate over residues 456–471 (GELTPANSQSRMSTNM). At Thr459 the chain carries Phosphothreonine. Position 463 is a phosphoserine (Ser463).

The protein belongs to the CSN1 family. As to quaternary structure, component of the CSN complex, composed of COPS1/GPS1, COPS2, COPS3, COPS4, COPS5, COPS6, COPS7 (COPS7A or COPS7B), COPS8 and COPS9. In the complex, it probably interacts directly with COPS2, COPS3, COPS4 and COPS5. Interacts directly with inositol kinase ITPK1. Interacts with CAPN8. Interacts with USP48. Interacts with ASB4; this interaction negatively regulates GPS1. In terms of tissue distribution, expressed in the base region of the oxyntic and pyloric mucosae.

It localises to the cytoplasm. It is found in the nucleus. In terms of biological role, essential component of the COP9 signalosome complex (CSN), a complex involved in various cellular and developmental processes. The CSN complex is an essential regulator of the ubiquitin (Ubl) conjugation pathway by mediating the deneddylation of the cullin subunits of SCF-type E3 ligase complexes, leading to decrease the Ubl ligase activity of SCF-type complexes such as SCF, CSA or DDB2. The complex is also involved in phosphorylation of p53/TP53, c-jun/JUN, IkappaBalpha/NFKBIA, ITPK1 and IRF8/ICSBP, possibly via its association with CK2 and PKD kinases. CSN-dependent phosphorylation of TP53 and JUN promotes and protects degradation by the Ubl system, respectively. Suppresses G-protein- and mitogen-activated protein kinase-mediated signal transduction. This is COP9 signalosome complex subunit 1 (Gps1) from Mus musculus (Mouse).